Consider the following 315-residue polypeptide: Homoserine kinase (315 aa).

Residue 97–107 (PPARGLGSSAT) coordinates ATP.

The protein belongs to the GHMP kinase family. Homoserine kinase subfamily.

The protein resides in the cytoplasm. The enzyme catalyses L-homoserine + ATP = O-phospho-L-homoserine + ADP + H(+). Its pathway is amino-acid biosynthesis; L-threonine biosynthesis; L-threonine from L-aspartate: step 4/5. Functionally, catalyzes the ATP-dependent phosphorylation of L-homoserine to L-homoserine phosphate. The protein is Homoserine kinase of Parasynechococcus marenigrum (strain WH8102).